Reading from the N-terminus, the 84-residue chain is MAHKKAGGSTRNGRDSNPKYLGVKRYGGEFVKAGTIIIRQRGTKTHPGVNVGCGKDHTLFALKDGTVKFHTGGALNRKFVSIEE.

Residues 1-20 (MAHKKAGGSTRNGRDSNPKY) form a disordered region.

Belongs to the bacterial ribosomal protein bL27 family.

This chain is Large ribosomal subunit protein bL27, found in Francisella tularensis subsp. tularensis (strain FSC 198).